The following is a 1110-amino-acid chain: Isoleucine--tRNA ligase (1110 aa).

A 'HIGH' region motif is present at residues 47–57 (PSANGTPGIHH). Positions 658-662 (KMSKR) match the 'KMSKS' region motif. Lys-661 is an ATP binding site.

The protein belongs to the class-I aminoacyl-tRNA synthetase family. IleS type 2 subfamily. As to quaternary structure, monomer. Requires Zn(2+) as cofactor.

Its subcellular location is the cytoplasm. It catalyses the reaction tRNA(Ile) + L-isoleucine + ATP = L-isoleucyl-tRNA(Ile) + AMP + diphosphate. Its function is as follows. Catalyzes the attachment of isoleucine to tRNA(Ile). As IleRS can inadvertently accommodate and process structurally similar amino acids such as valine, to avoid such errors it has two additional distinct tRNA(Ile)-dependent editing activities. One activity is designated as 'pretransfer' editing and involves the hydrolysis of activated Val-AMP. The other activity is designated 'posttransfer' editing and involves deacylation of mischarged Val-tRNA(Ile). This chain is Isoleucine--tRNA ligase, found in Cytophaga hutchinsonii (strain ATCC 33406 / DSM 1761 / CIP 103989 / NBRC 15051 / NCIMB 9469 / D465).